Here is a 457-residue protein sequence, read N- to C-terminus: Aromatic amino acid permease FywP (457 aa).

The next 12 membrane-spanning stretches (helical) occupy residues 16 to 36, 43 to 63, 91 to 111, 114 to 134, 154 to 174, 205 to 225, 243 to 263, 292 to 312, 342 to 362, 373 to 393, 403 to 423, and 424 to 444; these read IVML…SGKV, SVLL…YGVG, FADW…EAGV, FLAI…VAVL, AFIK…LLVI, GFLT…LAAI, GVLI…LHLL, IVLV…IYAT, NAIL…AVLG, ISFT…VLYF, VKLA…MQII, and TNPW…YFSY.

Belongs to the amino acid-polyamine-organocation (APC) superfamily. Amino acid transporter (AAT) (TC 2.A.3.1) family.

The protein localises to the cell membrane. Functionally, involved in phenylalanine and tyrosine uptake. Also has affinity for tryptophan. Plays no significant role in the excretion of accumulated phenylalanine. This Lactococcus lactis subsp. cremoris (strain MG1363) protein is Aromatic amino acid permease FywP.